The chain runs to 384 residues: ATP synthase subunit a (384 aa).

A disordered region spans residues 22-60 (PAPAAAPVEQHGAPAPEAAAPDAHAAPAGEHGAAVEAHA). 6 helical membrane passes run 131 to 151 (KHVM…LAAV), 189 to 209 (FVPY…FGLI), 218 to 238 (NLSV…YAAI), 258 to 278 (LAPL…TKPF), 293 to 313 (FVIL…VAFG), and 319 to 339 (LGIF…FTML). The tract at residues 355 to 384 (HGHAEEHGHAGPGMGSEHGSHVAGASPGHG) is disordered.

Belongs to the ATPase A chain family. In terms of assembly, F-type ATPases have 2 components, CF(1) - the catalytic core - and CF(0) - the membrane proton channel. CF(1) has five subunits: alpha(3), beta(3), gamma(1), delta(1), epsilon(1). CF(0) has three main subunits: a(1), b(2) and c(9-12). The alpha and beta chains form an alternating ring which encloses part of the gamma chain. CF(1) is attached to CF(0) by a central stalk formed by the gamma and epsilon chains, while a peripheral stalk is formed by the delta and b chains.

The protein localises to the cell inner membrane. Key component of the proton channel; it plays a direct role in the translocation of protons across the membrane. This chain is ATP synthase subunit a, found in Anaeromyxobacter dehalogenans (strain 2CP-1 / ATCC BAA-258).